We begin with the raw amino-acid sequence, 218 residues long: Ribose-5-phosphate isomerase A (218 aa).

Residues 28-31, 81-84, and 94-97 each bind substrate; these read TGST, DGAD, and KGGG. The active-site Proton acceptor is Glu-103. Lys-121 lines the substrate pocket.

This sequence belongs to the ribose 5-phosphate isomerase family. In terms of assembly, homodimer.

The catalysed reaction is aldehydo-D-ribose 5-phosphate = D-ribulose 5-phosphate. The protein operates within carbohydrate degradation; pentose phosphate pathway; D-ribose 5-phosphate from D-ribulose 5-phosphate (non-oxidative stage): step 1/1. Catalyzes the reversible conversion of ribose-5-phosphate to ribulose 5-phosphate. In Pseudoalteromonas atlantica (strain T6c / ATCC BAA-1087), this protein is Ribose-5-phosphate isomerase A.